A 42-amino-acid chain; its full sequence is Putative protein RNF216-like (42 aa).

The chain is Putative protein RNF216-like (RNF216P1) from Homo sapiens (Human).